The sequence spans 494 residues: Serine/arginine-rich splicing factor 4 (494 aa).

In terms of domain architecture, RRM 1 spans 2-72 (PRVYIGRLSY…ERVIVEHARG (71 aa)). Disordered regions lie at residues 72 to 95 (GPRRDGSYGSGRSGYGYRRSGRDK) and 169 to 494 (KIRL…HSRS). A phosphoserine mark is found at Ser78 and Ser84. One can recognise an RRM 2 domain in the interval 104–177 (YRLIVENLSS…RKIRLVEDKP (74 aa)). 2 stretches are compositionally biased toward basic residues: residues 179–206 (SRRRRSYSRSRSHSRSRSRSRHSRKSRS) and 214–246 (SHSKSRSRSRSGSRSRSKSRSRSQSRSRSKKEK). The segment covering 247–256 (SRSPSKEKSR) has biased composition (basic and acidic residues). The segment covering 257–267 (SRSHSAGKSRS) has biased composition (basic residues). The segment covering 268-278 (KSKDQAEEKIQ) has biased composition (basic and acidic residues). Over residues 286–302 (PKSRSPSRHKSKSKSRS) the composition is skewed to basic residues. Ser288, Ser290, and Ser292 each carry phosphoserine. Over residues 303–327 (RSQERRVEEEKRGSVSRGRSQEKSL) the composition is skewed to basic and acidic residues. Composition is skewed to basic residues over residues 328–359 (RQSRSRSRSKGGSRSRSRSRSKSKDKRKGRKR) and 367–382 (RSRSRSKSERSRKRGS). A compositionally biased stretch (basic and acidic residues) spans 411 to 431 (VSKEREHAKSESSQREGRGES). Phosphoserine is present on residues Ser431, Ser446, Ser456, Ser458, and Ser460. Positions 449-460 (KSKPNLPSESRS) are enriched in low complexity. Over residues 461-494 (RSKSASKTRSRSKSRSRSASRSPSRSRSRSHSRS) the composition is skewed to basic residues.

This sequence belongs to the splicing factor SR family. Found in a pre-mRNA splicing complex with SRSF4/SFRS4, SRSF5/SFRS5, SNRNP70, SNRPA1, SRRM1 and SRRM2. Interacts with PNN. In terms of processing, extensively phosphorylated on serine residues in the RS domain.

Its subcellular location is the nucleus speckle. Plays a role in alternative splice site selection during pre-mRNA splicing. Represses the splicing of MAPT/Tau exon 10. In Homo sapiens (Human), this protein is Serine/arginine-rich splicing factor 4 (SRSF4).